The primary structure comprises 438 residues: UDP-N-acetylmuramoylalanine--D-glutamate ligase (438 aa).

112-118 is a binding site for ATP; the sequence is GSNGKST.

The protein belongs to the MurCDEF family.

It is found in the cytoplasm. It carries out the reaction UDP-N-acetyl-alpha-D-muramoyl-L-alanine + D-glutamate + ATP = UDP-N-acetyl-alpha-D-muramoyl-L-alanyl-D-glutamate + ADP + phosphate + H(+). It functions in the pathway cell wall biogenesis; peptidoglycan biosynthesis. Its function is as follows. Cell wall formation. Catalyzes the addition of glutamate to the nucleotide precursor UDP-N-acetylmuramoyl-L-alanine (UMA). This Escherichia coli O6:H1 (strain CFT073 / ATCC 700928 / UPEC) protein is UDP-N-acetylmuramoylalanine--D-glutamate ligase (murD).